We begin with the raw amino-acid sequence, 431 residues long: UDP-N-acetylmuramate--L-alanine ligase (431 aa).

Residue 108 to 114 (GAHGKST) participates in ATP binding.

It belongs to the MurCDEF family.

It localises to the cytoplasm. It catalyses the reaction UDP-N-acetyl-alpha-D-muramate + L-alanine + ATP = UDP-N-acetyl-alpha-D-muramoyl-L-alanine + ADP + phosphate + H(+). It participates in cell wall biogenesis; peptidoglycan biosynthesis. In terms of biological role, cell wall formation. The sequence is that of UDP-N-acetylmuramate--L-alanine ligase from Campylobacter jejuni subsp. jejuni serotype O:6 (strain 81116 / NCTC 11828).